A 1447-amino-acid chain; its full sequence is Sister chromatid cohesion protein PDS5 homolog B (1447 aa).

Residues 383–419 (LLVNDHLLNFVRERTLDKRWRVRKEAMMGLAQIYKKY) form an HEAT repeat. The interval 1117–1447 (KSFFTPGKPK…RRRSAKRERR (331 aa)) is disordered. Position 1136 is an N6-acetyllysine (Lys-1136). Positions 1137–1155 (PLSSAGKQSQTKSSRMETV) are enriched in polar residues. A phosphoserine mark is found at Ser-1140, Ser-1162, Ser-1166, Ser-1176, Ser-1182, and Ser-1191. Residues 1156-1167 (SNASSSSNPSSP) are compositionally biased toward low complexity. The span at 1172–1184 (GRLDSSEMDHSEN) shows a compositional bias: basic and acidic residues. Composition is skewed to basic and acidic residues over residues 1196–1214 (KKSD…LEKP) and 1225–1243 (QEEK…EQKP). Residues 1245–1254 (GSQRSRKRGH) show a composition bias toward basic residues. The a.T hook 1 DNA-binding region spans 1249 to 1261 (SRKRGHTASESDE). The residue at position 1255 (Thr-1255) is a Phosphothreonine. A phosphoserine mark is found at Ser-1257 and Ser-1259. The segment covering 1265-1274 (PEEKRLKEDI) has biased composition (basic and acidic residues). Ser-1283 carries the phosphoserine modification. The segment at residues 1287–1299 (KGKRGRPPKPLGG) is a DNA-binding region (a.T hook 2). Basic residues predominate over residues 1310-1319 (TSKKGSKKKS). A phosphoserine mark is found at Ser-1319 and Ser-1334. The segment covering 1342 to 1353 (KSKQHRVSRRAQ) has biased composition (basic residues). Residues 1355 to 1372 (RAESPESSAIESTQSTPQ) are compositionally biased toward polar residues. Phosphoserine is present on residues Ser-1358 and Ser-1366. Thr-1367 is modified (phosphothreonine). Ser-1369 is modified (phosphoserine). Phosphothreonine occurs at positions 1370 and 1381. The a.T hook 3 DNA-binding region spans 1372–1384 (QKGRGRPSKTPSP). Over residues 1379-1388 (SKTPSPSQPK) the composition is skewed to low complexity. Phosphoserine is present on residues Ser-1383 and Ser-1417. Over residues 1422–1432 (IPQEETEEEEV) the composition is skewed to acidic residues. Over residues 1437–1447 (VRRRSAKRERR) the composition is skewed to basic residues.

The protein belongs to the PDS5 family. As to quaternary structure, interacts with the cohesin complex. Interacts with RAD21; the interaction is direct. Interacts with WAPL (via FGF motifs) or CDCA5 (via the FGF motif); the interaction is direct, cohesin-dependent and competitive. As to expression, widely expressed.

It is found in the nucleus. Regulator of sister chromatid cohesion in mitosis which may stabilize cohesin complex association with chromatin. May couple sister chromatid cohesion during mitosis to DNA replication. Cohesion ensures that chromosome partitioning is accurate in both meiotic and mitotic cells and plays an important role in DNA repair. Plays a role in androgen-induced proliferative arrest in prostate cells. The chain is Sister chromatid cohesion protein PDS5 homolog B (PDS5B) from Homo sapiens (Human).